We begin with the raw amino-acid sequence, 469 residues long: 3-isopropylmalate dehydratase large subunit (469 aa).

Positions 347, 410, and 413 each coordinate [4Fe-4S] cluster.

This sequence belongs to the aconitase/IPM isomerase family. LeuC type 1 subfamily. Heterodimer of LeuC and LeuD. [4Fe-4S] cluster is required as a cofactor.

It carries out the reaction (2R,3S)-3-isopropylmalate = (2S)-2-isopropylmalate. It participates in amino-acid biosynthesis; L-leucine biosynthesis; L-leucine from 3-methyl-2-oxobutanoate: step 2/4. Catalyzes the isomerization between 2-isopropylmalate and 3-isopropylmalate, via the formation of 2-isopropylmaleate. The polypeptide is 3-isopropylmalate dehydratase large subunit (Burkholderia mallei (strain NCTC 10247)).